We begin with the raw amino-acid sequence, 393 residues long: MLPAVKTVEAEEEYAEDCPELVPIETKNQEEENLDFITKIPVTIVTGYLGAGKTTLLNYILTEQHNRKIAVILNEFGEGSAVEKSLAVSQGGELYEEWLELRNGCLCCSVKDSGLRAIENLMQKKGKFDYILLETTGLADPGAVASMFWVDAELGSDIYLDGIITVVDSKYGLKHLTEEKPDGLVNEATRQVALADMILINKTDLVSEEELNNLRTTIRSINGLGKVLETQRSRVHLSNILDLHAYDILSGISLQKKLQHVSTAPHLDQSIVTVTFEVPGSAKEECLNVFIQNLLWEKNVKNKDGHCMEVIRLKGLVSIKDKPQQMIVQGIHELYDLEESLVNWKDDAERACQLVFIGRNLDKDVLQQLFLTAVAEAEEQRTAPGRDGVCPSH.

The short motif at 16-23 (EDCPELVP) is the psi-PxLVp motif element. A GTP-binding site is contributed by 47–54 (GYLGAGKT). The Zn(2+) site is built by Cys105, Cys107, and Cys108. The CXCC motif motif lies at 105–108 (CLCC). GTP-binding positions include 108–112 (CSVKD) and 201–204 (NKTD). In terms of domain architecture, CobW C-terminal spans 271-374 (IVTVTFEVPG…VLQQLFLTAV (104 aa)).

Belongs to the SIMIBI class G3E GTPase family. ZNG1 subfamily. As to expression, present at high level in the nuclei of the ureteric bud cells in the developing kidneys.

It is found in the nucleus. The enzyme catalyses GTP + H2O = GDP + phosphate + H(+). Zinc chaperone that directly transfers zinc cofactor to target metalloproteins, thereby activating them. Catalyzes zinc insertion into the active site of methionine aminopeptidase METAP1, which function to cleave the initiator methionine from polypeptides during or after protein translation. Mechanistically, the N-terminal psi-PxLVp motif binds to the C6H2-type zinc finger of inactive form of METAP1. After formation of the docked complex, zinc is transferred from the CXCC motif in the GTPase domain of ZNG1 to the zinc binding site in the peptidase domain of METAP1 in a process requiring GTP hydrolysis. GTP/GDP exchange is required for release of active METAP1. This Mus musculus (Mouse) protein is Zinc-regulated GTPase metalloprotein activator 1 (Zng1).